The primary structure comprises 689 residues: Protein asunder (689 aa).

Residues 521–550 adopt a coiled-coil conformation; it reads NGARLKLSKAKDQYRLLYRELEQLIQLNAT. 2 disordered regions span residues 578–619 and 662–689; these read GASL…SKRR and PDFG…SVRS. Low complexity predominate over residues 599–614; sequence SSGSASGSSNSNSLLK. The short motif at 613-619 is the Nuclear localization signal (NLS) element; sequence LKASKRR.

Belongs to the Integrator subunit 13 family. In terms of assembly, belongs to the multiprotein complex Integrator, at least composed of IntS1, IntS2, IntS3, IntS4, omd/IntS5, IntS6, defl/IntS7, IntS8, IntS9, IntS10, IntS11, IntS12, asun/IntS13, IntS14 and IntS15. The core complex associates with protein phosphatase 2A subunits mts/PP2A and Pp2A-29B, to form the Integrator-PP2A (INTAC) complex. Post-translationally, phosphorylated.

Its subcellular location is the nucleus. The protein resides in the cytoplasm. The protein localises to the perinuclear region. Functionally, component of the integrator complex, a multiprotein complex that terminates RNA polymerase II (Pol II) transcription in the promoter-proximal region of genes. The integrator complex provides a quality checkpoint during transcription elongation by driving premature transcription termination of transcripts that are unfavorably configured for transcriptional elongation: the complex terminates transcription by (1) catalyzing dephosphorylation of the C-terminal domain (CTD) of Pol II subunit Polr2A/Rbp1 and Spt5, and (2) degrading the exiting nascent RNA transcript via endonuclease activity. The integrator complex is also involved in the 3'-end processing of the U7 snRNA, and also the spliceosomal snRNAs U1, U2, U4 and U5. The protein is Protein asunder (asun) of Drosophila yakuba (Fruit fly).